Consider the following 326-residue polypeptide: Pyruvate dehydrogenase E1 component subunit alpha (326 aa).

Heterodimer of an alpha and a beta chain. Thiamine diphosphate serves as cofactor.

It catalyses the reaction N(6)-[(R)-lipoyl]-L-lysyl-[protein] + pyruvate + H(+) = N(6)-[(R)-S(8)-acetyldihydrolipoyl]-L-lysyl-[protein] + CO2. Its function is as follows. The pyruvate dehydrogenase complex catalyzes the overall conversion of pyruvate to acetyl-CoA and CO(2). It contains multiple copies of three enzymatic components: pyruvate dehydrogenase (E1), dihydrolipoamide acetyltransferase (E2) and lipoamide dehydrogenase (E3). This chain is Pyruvate dehydrogenase E1 component subunit alpha (pdhA), found in Rickettsia felis (strain ATCC VR-1525 / URRWXCal2) (Rickettsia azadi).